The following is a 179-amino-acid chain: Translation initiation factor IF-3 (179 aa).

The protein belongs to the IF-3 family. As to quaternary structure, monomer.

It is found in the cytoplasm. IF-3 binds to the 30S ribosomal subunit and shifts the equilibrium between 70S ribosomes and their 50S and 30S subunits in favor of the free subunits, thus enhancing the availability of 30S subunits on which protein synthesis initiation begins. The polypeptide is Translation initiation factor IF-3 (Buchnera aphidicola subsp. Acyrthosiphon pisum (strain 5A)).